A 543-amino-acid polypeptide reads, in one-letter code: Zinc finger CCCH-type with G patch domain-containing protein (543 aa).

Disordered stretches follow at residues 55–79 and 95–132; these read AATSDDDDAPDTAGRAPPATADNPI and TEDSAAGEQAGEQTATEPERQPNDDDADNDDDADDKLD. Low complexity predominate over residues 65 to 76; it reads DTAGRAPPATAD. Acidic residues predominate over residues 118-131; the sequence is DDDADNDDDADDKL. The segment at 186–209 adopts a C3H1-type zinc-finger fold; sequence PCAYFLEGECRFTDEKCRYSHGEV. Residues 272 to 304 form a disordered region; that stretch reads PFEDLLPLDEDEDGQEAAEDSESDTDGADEEEA. Positions 277–304 are enriched in acidic residues; sequence LPLDEDEDGQEAAEDSESDTDGADEEEA. The 47-residue stretch at 335–381 folds into the G-patch domain; it reads TRGIGSKIMQKMGYIVGTGLGREGEGIVVPVSAQVLPQGRSLDYCME. The interval 438 to 460 is disordered; that stretch reads GAAGGESSRPNRNRPGALSRQEL.

It localises to the nucleus. Functionally, transcription repressor. The sequence is that of Zinc finger CCCH-type with G patch domain-containing protein from Anopheles gambiae (African malaria mosquito).